Reading from the N-terminus, the 404-residue chain is S-adenosylmethionine synthase (404 aa).

139–144 is a binding site for ATP; the sequence is GKGSTD.

Belongs to the AdoMet synthase 2 family. Requires Mg(2+) as cofactor.

It carries out the reaction L-methionine + ATP + H2O = S-adenosyl-L-methionine + phosphate + diphosphate. It participates in amino-acid biosynthesis; S-adenosyl-L-methionine biosynthesis; S-adenosyl-L-methionine from L-methionine: step 1/1. Catalyzes the formation of S-adenosylmethionine from methionine and ATP. This chain is S-adenosylmethionine synthase, found in Saccharolobus islandicus (strain Y.N.15.51 / Yellowstone #2) (Sulfolobus islandicus).